Here is a 73-residue protein sequence, read N- to C-terminus: UPF0435 protein lwe1727 (73 aa).

The protein belongs to the UPF0435 family.

This is UPF0435 protein lwe1727 from Listeria welshimeri serovar 6b (strain ATCC 35897 / DSM 20650 / CCUG 15529 / CIP 8149 / NCTC 11857 / SLCC 5334 / V8).